The sequence spans 131 residues: MAKPAAAARPRRRERKNITSGVAHVNATFNNTMITITDAQGNTISWSSAGMQGFKGSRKSTPYAAQVAAEDAGRKASEHGMRTLEVEVKGPGAGRESALRALQAVGFQITSIRDVTPIPHNGCRPRKRRRV.

It belongs to the universal ribosomal protein uS11 family. Part of the 30S ribosomal subunit. Interacts with proteins S7 and S18. Binds to IF-3.

Located on the platform of the 30S subunit, it bridges several disparate RNA helices of the 16S rRNA. Forms part of the Shine-Dalgarno cleft in the 70S ribosome. The sequence is that of Small ribosomal subunit protein uS11 from Paramagnetospirillum magneticum (strain ATCC 700264 / AMB-1) (Magnetospirillum magneticum).